Here is a 466-residue protein sequence, read N- to C-terminus: Asparagine--tRNA ligase (466 aa).

It belongs to the class-II aminoacyl-tRNA synthetase family. Homodimer.

It is found in the cytoplasm. The catalysed reaction is tRNA(Asn) + L-asparagine + ATP = L-asparaginyl-tRNA(Asn) + AMP + diphosphate + H(+). In Wigglesworthia glossinidia brevipalpis, this protein is Asparagine--tRNA ligase.